The following is a 588-amino-acid chain: Protein decapentaplegic (588 aa).

Residues 1–23 (MRAWLLLLAVLATFQTIVRVAST) form the signal peptide. Residues 24 to 456 (EDISQRFIAA…DGRHKARSIR (433 aa)) constitute a propeptide that is removed on maturation. The segment at 74 to 169 (FSEPASFSDS…STESHQSSSI (96 aa)) is disordered. Over residues 96 to 119 (SKSDANRQFNEVHKPRTDQLENSK) the composition is skewed to basic and acidic residues. Asn120 is a glycosylation site (N-linked (GlcNAc...) asparagine). A compositionally biased stretch (basic residues) spans 140-153 (RSHHKKSHHHRSHQ). Over residues 156–169 (QASASTESHQSSSI) the composition is skewed to low complexity. N-linked (GlcNAc...) asparagine glycans are attached at residues Asn342 and Asn377. The interval 454–484 (SIRDVSGGEGGGKGGRNKRQPRRPTRRKNHD) is disordered. Basic residues predominate over residues 468 to 481 (GRNKRQPRRPTRRK). Cystine bridges form between Cys487/Cys553, Cys516/Cys585, and Cys520/Cys587. N-linked (GlcNAc...) asparagine glycosylation is present at Asn529.

Belongs to the TGF-beta family. In terms of assembly, heterodimers of scw/dpp are the active subunit, dpp/dpp homodimers elicit a basal response and scw/scw homodimers alone are ineffective in specifying a dorsal pattern. Component of a complex composed of dpp, sog and tsg. Interacts with nord and gbb; the interaction interferes with dpp secretion. As to expression, expressed in the dorsal region of the embryo, and becomes enriched in a dorsal midline stripe just prior to gastrulation. Expressed in midgut mesoderm and in two overlapping regions of the embryonic large intestine. Expressed in a long-range concentration gradient in the wing imaginal disk.

The protein localises to the secreted. Its function is as follows. Required during oogenesis for eggshell patterning and dorsal/ventral patterning of the embryo. Acts as a morphogen during embryogenesis to pattern the dorsal/ventral axis, specifying dorsal ectoderm and amnioserosa cell fate within the dorsal half of the embryo; this activity is antagonized by binding to sog and tsg. Induces the formation of visceral mesoderm and the heart in early embryos. Required later in embryogenesis for dorsal closure and patterning of the hindgut. Also functions postembryonically as a long-range morphogen during imaginal disk development; is responsible for the progression of the morphogenetic furrow during eye development. Patterns the wing imaginal disk along its anterior/posterior axis and has a role in positioning pro-veins. Also required to subdivide the wing disk along the proximal/distal axis into body wall (notum) and wing. Ensures the correct architecture of wing epithelial cells. Has multiple roles in the developing tracheal system, controlling directed tracheal cell migration during embryogenesis and later specifying the fate of fusion cells in the tracheal branches. Required for viability of larvae. Essential for the maintenance and division of germline stem cells in the ovary. Signals via the type I receptor tkv, the type II receptor punt, and in some tissues via the type I receptor sax, in a signaling cascade that leads to activation and repression of target genes. The chain is Protein decapentaplegic (dpp) from Drosophila melanogaster (Fruit fly).